We begin with the raw amino-acid sequence, 242 residues long: Uridylate kinase (242 aa).

Residue 8-11 participates in ATP binding; the sequence is KFSG. Gly50 provides a ligand contact to UMP. The ATP site is built by Gly51 and Arg55. Residues Asp71 and 132–139 each bind UMP; that span reads TGNPFFTT. ATP is bound by residues Thr159, Tyr165, and Asp168.

It belongs to the UMP kinase family. As to quaternary structure, homohexamer.

It is found in the cytoplasm. The catalysed reaction is UMP + ATP = UDP + ADP. The protein operates within pyrimidine metabolism; CTP biosynthesis via de novo pathway; UDP from UMP (UMPK route): step 1/1. With respect to regulation, inhibited by UTP. Its function is as follows. Catalyzes the reversible phosphorylation of UMP to UDP. The protein is Uridylate kinase of Nitratiruptor sp. (strain SB155-2).